The following is a 157-amino-acid chain: MKLNDLRDKDGATHSKKRLGRGIGSGSGKTAGRGVKGQKARSGVAINGFEGGQMPLYRRLPKRGFNNIFAKSFVVVSLARIQEAVDAKKLDAKATVTAEALVAAGVIRRVKDGVRVLSDGELKAKLAFDVAGASKAAIEKIEKAGGSVKLPEKAAAE.

Positions 1 to 13 are enriched in basic and acidic residues; that stretch reads MKLNDLRDKDGAT. Residues 1-39 form a disordered region; that stretch reads MKLNDLRDKDGATHSKKRLGRGIGSGSGKTAGRGVKGQK. A compositionally biased stretch (gly residues) spans 21-35; it reads RGIGSGSGKTAGRGV.

Belongs to the universal ribosomal protein uL15 family. In terms of assembly, part of the 50S ribosomal subunit.

Binds to the 23S rRNA. This chain is Large ribosomal subunit protein uL15, found in Mesorhizobium japonicum (strain LMG 29417 / CECT 9101 / MAFF 303099) (Mesorhizobium loti (strain MAFF 303099)).